A 305-amino-acid polypeptide reads, in one-letter code: UDP-3-O-acyl-N-acetylglucosamine deacetylase (305 aa).

Zn(2+) is bound by residues H78, H237, and D241. The Proton donor role is filled by H264.

Belongs to the LpxC family. Zn(2+) is required as a cofactor.

It carries out the reaction a UDP-3-O-[(3R)-3-hydroxyacyl]-N-acetyl-alpha-D-glucosamine + H2O = a UDP-3-O-[(3R)-3-hydroxyacyl]-alpha-D-glucosamine + acetate. The protein operates within glycolipid biosynthesis; lipid IV(A) biosynthesis; lipid IV(A) from (3R)-3-hydroxytetradecanoyl-[acyl-carrier-protein] and UDP-N-acetyl-alpha-D-glucosamine: step 2/6. Functionally, catalyzes the hydrolysis of UDP-3-O-myristoyl-N-acetylglucosamine to form UDP-3-O-myristoylglucosamine and acetate, the committed step in lipid A biosynthesis. The protein is UDP-3-O-acyl-N-acetylglucosamine deacetylase of Burkholderia cenocepacia (strain HI2424).